A 231-amino-acid polypeptide reads, in one-letter code: Lipoprotein-releasing system ATP-binding protein LolD (231 aa).

Residues 6 to 230 enclose the ABC transporter domain; that stretch reads LSCKNVSKKY…DGELELVINS (225 aa). 42–49 serves as a coordination point for ATP; that stretch reads GLSGSGKT.

It belongs to the ABC transporter superfamily. Lipoprotein translocase (TC 3.A.1.125) family. In terms of assembly, the complex is composed of two ATP-binding proteins (LolD) and two transmembrane proteins (LolC and LolE).

The protein localises to the cell inner membrane. Part of the ABC transporter complex LolCDE involved in the translocation of mature outer membrane-directed lipoproteins, from the inner membrane to the periplasmic chaperone, LolA. Responsible for the formation of the LolA-lipoprotein complex in an ATP-dependent manner. The polypeptide is Lipoprotein-releasing system ATP-binding protein LolD (Francisella tularensis subsp. tularensis (strain FSC 198)).